A 92-amino-acid chain; its full sequence is MSRSLKKGPFVADHLLKKIEKLNAKGKKVVIKTWSRSSMIVPPMIGHTIGVYNGREHIPVFVSDQMVGHRLGEFSPTRTYRGHAKKDKKAKR.

Residues 73-92 form a disordered region; that stretch reads EFSPTRTYRGHAKKDKKAKR. Residues 80–92 are compositionally biased toward basic residues; the sequence is YRGHAKKDKKAKR.

This sequence belongs to the universal ribosomal protein uS19 family.

Its subcellular location is the plastid. The protein resides in the chloroplast. Functionally, protein S19 forms a complex with S13 that binds strongly to the 16S ribosomal RNA. The sequence is that of Small ribosomal subunit protein uS19c (rps19) from Chlamydomonas reinhardtii (Chlamydomonas smithii).